Consider the following 150-residue polypeptide: Ribosome maturation factor RimP (150 aa).

The protein belongs to the RimP family.

The protein resides in the cytoplasm. Required for maturation of 30S ribosomal subunits. This Escherichia coli O9:H4 (strain HS) protein is Ribosome maturation factor RimP.